A 1106-amino-acid polypeptide reads, in one-letter code: Carbamoyl phosphate synthase large chain (1106 aa).

The tract at residues 1–402 is carboxyphosphate synthetic domain; it reads MPKREDLKSV…ALQKALRSLE (402 aa). Residues R129, R169, G175, G176, E208, I210, E215, G241, V242, H243, Q285, and E299 each contribute to the ATP site. One can recognise an ATP-grasp 1 domain in the interval 133 to 328; that stretch reads KGVVERCGAE…IAKIATKLSL (196 aa). The Mg(2+) site is built by Q285, E299, and N301. Mn(2+) contacts are provided by Q285, E299, and N301. Positions 403 to 546 are oligomerization domain; it reads QKGSQLDFGS…YHYSSYDQED (144 aa). The tract at residues 547–956 is carbamoyl phosphate synthetic domain; the sequence is EIALHEKPSV…AFAKSQAAAN (410 aa). The region spanning 677–868 is the ATP-grasp 2 domain; sequence ARVLDIAGLI…LAKAAALIGT (192 aa). ATP is bound by residues R713, R752, L754, E759, G784, I785, H786, S787, Q827, and E839. Mg(2+)-binding residues include Q827, E839, and N841. Mn(2+) is bound by residues Q827, E839, and N841. Residues 957–1106 form the MGS-like domain; sequence NALPTEGKVF…EALLEAAANV (150 aa). The interval 957–1106 is allosteric domain; the sequence is NALPTEGKVF…EALLEAAANV (150 aa).

This sequence belongs to the CarB family. As to quaternary structure, composed of two chains; the small (or glutamine) chain promotes the hydrolysis of glutamine to ammonia, which is used by the large (or ammonia) chain to synthesize carbamoyl phosphate. Tetramer of heterodimers (alpha,beta)4. Mg(2+) is required as a cofactor. Mn(2+) serves as cofactor.

The catalysed reaction is hydrogencarbonate + L-glutamine + 2 ATP + H2O = carbamoyl phosphate + L-glutamate + 2 ADP + phosphate + 2 H(+). It catalyses the reaction hydrogencarbonate + NH4(+) + 2 ATP = carbamoyl phosphate + 2 ADP + phosphate + 2 H(+). It functions in the pathway amino-acid biosynthesis; L-arginine biosynthesis; carbamoyl phosphate from bicarbonate: step 1/1. The protein operates within pyrimidine metabolism; UMP biosynthesis via de novo pathway; (S)-dihydroorotate from bicarbonate: step 1/3. Functionally, large subunit of the glutamine-dependent carbamoyl phosphate synthetase (CPSase). CPSase catalyzes the formation of carbamoyl phosphate from the ammonia moiety of glutamine, carbonate, and phosphate donated by ATP, constituting the first step of 2 biosynthetic pathways, one leading to arginine and/or urea and the other to pyrimidine nucleotides. The large subunit (synthetase) binds the substrates ammonia (free or transferred from glutamine from the small subunit), hydrogencarbonate and ATP and carries out an ATP-coupled ligase reaction, activating hydrogencarbonate by forming carboxy phosphate which reacts with ammonia to form carbamoyl phosphate. The protein is Carbamoyl phosphate synthase large chain of Renibacterium salmoninarum (strain ATCC 33209 / DSM 20767 / JCM 11484 / NBRC 15589 / NCIMB 2235).